Reading from the N-terminus, the 348-residue chain is MGTVEKQNLILAFESSCDETSVAVIKDGHEILSNVIATQINSHKRFGGVVPEVASRHHIEQITICIEAALQEAHVTYADLDAVAVTYGPGLVGALLVGVNAAKTVAYAHQLPLIPVNHMAGHIYAARFVKPFEFPLMALLVSGGHTELVYMQADGQFEIIGETRDDAAGEAYDKIGRVLGVPYPAGKVIDEMAHAGHDTFKFPRAMIDEDNYDFSFSGLKSAFINTVHHADQIGATLDKNDLAASFQASVVDVLMSKTLRVLKQYPVKQLVLAGGVAANQGLRERLQQDLPAAFPDTELILAPLKLCGDNGAMIGAAGYVQYQHHQFGDATLNADPSLEFDWMPGMLK.

Positions 118 and 122 each coordinate Fe cation. Residues 140-144 (LVSGG), Asp173, Gly186, Asp190, and Asn279 each bind substrate. Asp309 provides a ligand contact to Fe cation.

This sequence belongs to the KAE1 / TsaD family. The cofactor is Fe(2+).

The protein resides in the cytoplasm. It carries out the reaction L-threonylcarbamoyladenylate + adenosine(37) in tRNA = N(6)-L-threonylcarbamoyladenosine(37) in tRNA + AMP + H(+). Required for the formation of a threonylcarbamoyl group on adenosine at position 37 (t(6)A37) in tRNAs that read codons beginning with adenine. Is involved in the transfer of the threonylcarbamoyl moiety of threonylcarbamoyl-AMP (TC-AMP) to the N6 group of A37, together with TsaE and TsaB. TsaD likely plays a direct catalytic role in this reaction. This chain is tRNA N6-adenosine threonylcarbamoyltransferase, found in Lactiplantibacillus plantarum (strain ATCC BAA-793 / NCIMB 8826 / WCFS1) (Lactobacillus plantarum).